Here is a 328-residue protein sequence, read N- to C-terminus: Carbonic anhydrase-related protein 11 (328 aa).

Residues 1–23 (MGGAARLSAPQALVLWAALGAAA) form the signal peptide. Positions 33–303 (DWWSYKENLQ…LAHRALRGNR (271 aa)) constitute an Alpha-carbonic anhydrase domain. Asn118 carries N-linked (GlcNAc...) asparagine glycosylation. The segment at 300–328 (RGNRDPRHPERRCRGPNYRLHVDGGPHGR) is disordered. Residues 319 to 328 (LHVDGGPHGR) show a composition bias toward basic and acidic residues.

The protein belongs to the alpha-carbonic anhydrase family.

Its subcellular location is the secreted. In terms of biological role, does not have a catalytic activity. The chain is Carbonic anhydrase-related protein 11 (Ca11) from Mus musculus (Mouse).